The sequence spans 34 residues: Photosystem II reaction center protein Psb30 (34 aa).

Residues 7 to 27 (VAQLLALFVIITSGPAIIILI) traverse the membrane as a helical segment.

Belongs to the Psb30/Ycf12 family. As to quaternary structure, PSII is composed of 1 copy each of membrane proteins PsbA, PsbB, PsbC, PsbD, PsbE, PsbF, PsbH, PsbI, PsbJ, PsbK, PsbL, PsbM, PsbT, PsbX, PsbY, PsbZ, Psb30/Ycf12, peripheral proteins of the oxygen-evolving complex and a large number of cofactors. It forms dimeric complexes.

Its subcellular location is the plastid. The protein localises to the chloroplast thylakoid membrane. In terms of biological role, a core subunit of photosystem II (PSII), probably helps stabilize the reaction center. The protein is Photosystem II reaction center protein Psb30 of Guillardia theta (Cryptophyte).